The following is a 654-amino-acid chain: Threonine--tRNA ligase (654 aa).

The region spanning 1–63 (MASINVKFPD…TTDGSIEIIA (63 aa)) is the TGS domain. A catalytic region spans residues 248 to 546 (DHRVIGNELD…LTEIYKGAFP (299 aa)). Zn(2+)-binding residues include C342, H393, and H523.

This sequence belongs to the class-II aminoacyl-tRNA synthetase family. As to quaternary structure, homodimer. Zn(2+) serves as cofactor.

It is found in the cytoplasm. The catalysed reaction is tRNA(Thr) + L-threonine + ATP = L-threonyl-tRNA(Thr) + AMP + diphosphate + H(+). In terms of biological role, catalyzes the attachment of threonine to tRNA(Thr) in a two-step reaction: L-threonine is first activated by ATP to form Thr-AMP and then transferred to the acceptor end of tRNA(Thr). Also edits incorrectly charged L-seryl-tRNA(Thr). In Lactiplantibacillus plantarum (strain ATCC BAA-793 / NCIMB 8826 / WCFS1) (Lactobacillus plantarum), this protein is Threonine--tRNA ligase.